We begin with the raw amino-acid sequence, 400 residues long: Cell division protein FtsZ 2 (400 aa).

The segment covering 1–16 (MQDIVREAMERDEAER) has biased composition (basic and acidic residues). The interval 1 to 30 (MQDIVREAMERDEAERQTQSSLEDSDDQFG) is disordered. GTP is bound by residues 41–45 (GAGNN), 128–130 (GTG), Glu-159, Arg-162, and Asp-205. The tract at residues 338-400 (VLGPSTQKQA…EKNNGLDVIR (63 aa)) is disordered. A compositionally biased stretch (low complexity) spans 352–364 (QSIQSRESQQQHS). Residues 365-382 (GSEFDSSERAQTAQSGTW) are compositionally biased toward polar residues. The span at 385-400 (GGRDEVEKNNGLDVIR) shows a compositional bias: basic and acidic residues.

The protein belongs to the FtsZ family. Homodimer. Polymerizes to form a dynamic ring structure in a strictly GTP-dependent manner. Interacts directly with several other division proteins. Interacts with SepF.

It localises to the cytoplasm. Essential cell division protein that forms a contractile ring structure (Z ring) at the future cell division site. The regulation of the ring assembly controls the timing and the location of cell division. One of the functions of the FtsZ ring is to recruit other cell division proteins to the septum to produce a new cell wall between the dividing cells. Binds GTP and shows GTPase activity. Required for division ring constriction. This is Cell division protein FtsZ 2 from Haloferax volcanii (strain ATCC 29605 / DSM 3757 / JCM 8879 / NBRC 14742 / NCIMB 2012 / VKM B-1768 / DS2) (Halobacterium volcanii).